The primary structure comprises 100 residues: Urease subunit gamma (100 aa).

Belongs to the urease gamma subunit family. Heterotrimer of UreA (gamma), UreB (beta) and UreC (alpha) subunits. Three heterotrimers associate to form the active enzyme.

The protein localises to the cytoplasm. It carries out the reaction urea + 2 H2O + H(+) = hydrogencarbonate + 2 NH4(+). The protein operates within nitrogen metabolism; urea degradation; CO(2) and NH(3) from urea (urease route): step 1/1. The polypeptide is Urease subunit gamma (Polaromonas naphthalenivorans (strain CJ2)).